The primary structure comprises 203 residues: Cupin-domain-containing oxidoreductase fogC (203 aa).

The tract at residues 105–171 is cupin-like domain; sequence DFAPGVESPL…GNGTLPGRML (67 aa).

Belongs to the virC family.

It participates in secondary metabolite biosynthesis. Its function is as follows. Cupin-domain-containing oxidoreductase; part of the gene cluster that mediates the biosynthesis of flavoglaucin and congeners (including aspergin, dihydroauroglaucin and auroglaucin), prenylated salicylaldehyde derivatives carrying a saturated or an unsaturated C-7 side chain. The PKS fogA releases the carboxylic acid (8E,10E,12E)-3,5,7-trihydroxytetradeca-8,10,12-trienoic acid as its product, as well as derivatives with one and two double bonds. FogA is indeed able to reduce the initial triketide, thus being at least partially responsible for the differently saturated heptyl side chains of flavoglaucin congeners. The oxidoreductases fogB, fogC and fogD modify the nascent polyketide in fogA-bound form and, together, fogA, fogB, fogC and fogD are necessary for the formation of the aromatic core and the cyclized PKS products are released as salicyl alcohols. In particular, fogB is responsible for oxidation of a hydroxyl group or reduction of remaining double bond(s) at the C-7 residue whereas fogD is probably involved in the reductive release of the modified PKS products. The cytochrome P450 monooxygenase fogE is then responsible for the hydroxylation at C-3 of the benzene ring. The fogE products are substrates of the prenyltransferase fogH and the prenylated benzyl alcohols are subsequently oxidized by the fogF to produce the final aryl aldehydes flavoglaucin and congeners. The short-chain dehydrogenase fogG does not seem to be involved in the biosynthesis of the prenylated salicylaldehyde derivatives. This is Cupin-domain-containing oxidoreductase fogC from Aspergillus ruber (strain CBS 135680).